Here is a 115-residue protein sequence, read N- to C-terminus: MDIMKKIELEHLRMDLPKFRSGDTVKVHLRIVEGEKERIQMFQGNVIRIHRGTTGGTFTVRKVSDGVGVERVFPLHSPFIDRVELITEGRVRRSRLYYLRDLRGKAARIKPKNRF.

It belongs to the bacterial ribosomal protein bL19 family.

This protein is located at the 30S-50S ribosomal subunit interface and may play a role in the structure and function of the aminoacyl-tRNA binding site. The chain is Large ribosomal subunit protein bL19 from Nitratidesulfovibrio vulgaris (strain ATCC 29579 / DSM 644 / CCUG 34227 / NCIMB 8303 / VKM B-1760 / Hildenborough) (Desulfovibrio vulgaris).